The following is a 662-amino-acid chain: DNA ligase (662 aa).

NAD(+) contacts are provided by residues 31-35 and 79-80; these read DKDYD and SL. The N6-AMP-lysine intermediate role is filled by K121. Residues R143, E177, and K313 each contribute to the NAD(+) site. Zn(2+) contacts are provided by C406, C409, C422, and C428. One can recognise a BRCT domain in the interval 586-662; sequence VLESPFMGKT…LSEEEFENMI (77 aa).

This sequence belongs to the NAD-dependent DNA ligase family. LigA subfamily. Mg(2+) serves as cofactor. The cofactor is Mn(2+).

It carries out the reaction NAD(+) + (deoxyribonucleotide)n-3'-hydroxyl + 5'-phospho-(deoxyribonucleotide)m = (deoxyribonucleotide)n+m + AMP + beta-nicotinamide D-nucleotide.. In terms of biological role, DNA ligase that catalyzes the formation of phosphodiester linkages between 5'-phosphoryl and 3'-hydroxyl groups in double-stranded DNA using NAD as a coenzyme and as the energy source for the reaction. It is essential for DNA replication and repair of damaged DNA. The protein is DNA ligase of Clostridium perfringens (strain SM101 / Type A).